A 764-amino-acid chain; its full sequence is MTQLENEVPDKDHLRFFSLGGSNEVGRSCHILQYKGKTLMLDAGIHPAHQGLASLPYYDEFDLSTIDLLLISHFHLDHAASLPYVMQRTNFRGRVFMTHPTKAIYRWLLNDFVKVTSIGDSPGQDSSNDNLYSDEDLAESFDRIETIDYHSTMEVNGIKFTAFHAGHVLGAAMFQIEIAGVRVLFTGDYSREVDRHLNSAEVPPQSSDVIIVESTFGTATHEPRQNRERKLTQLIHTVVSKGGRVLLPVFALGRAQEIMLILDEYWQNHKEELGNGQVPIFYASNLAKKCMSVFQTYVNMMNDDIRKKFKDSQTNPFIFKNISYLKNLDEFEDFGPSVMLASPGMLQNGLSRDILEKWCPEEKNLVLVTGYSVEGTMAKYLLLEPEAIPSVHNPEITIPRRCQVDEITFAAHVDFRENLEFIELIGASNIILVHGESNPMGRLKSALLSNFSSLKDTENEVHVFNPRNCVFVDIEFKDVKVARAVGKIIEDLDEFITEEDALKNEKRITEIHEEDPETEESKTEIVKEENEKIVSGILVSDEKNFDLSLVSLSDLREHYQQLSTTVLTERQTVHLDCKSELVYWHICQMFGDVDVYIDEENVSLKNINPEFKTRKIKKGELEIKIMGDVILNIVDNVATLQWTQNVISDSVADSVMAILLSVESAPASIKMSSKSCGHHHGHDDHTTKIKNISRVFKEQFGDTFTLFLNEEDSKEEIKGTINLGKTTACINFSKMVVEECNSNPLKGRIESLLKIGSDLVAPLC.

Zn(2+)-binding residues include His-73, His-75, Asp-77, His-78, His-167, and Asp-188. His-412 functions as the Proton donor in the catalytic mechanism. His-434 contributes to the Zn(2+) binding site.

It belongs to the metallo-beta-lactamase superfamily. RNA-metabolizing metallo-beta-lactamase-like family. CPSF2/YSH1 subfamily.

It is found in the nucleus. Its function is as follows. Component of the cleavage factor I (CF I) involved in pre-mRNA 3'-end processing. In Kluyveromyces lactis (strain ATCC 8585 / CBS 2359 / DSM 70799 / NBRC 1267 / NRRL Y-1140 / WM37) (Yeast), this protein is Endoribonuclease YSH1 (YSH1).